We begin with the raw amino-acid sequence, 568 residues long: Proline--tRNA ligase (568 aa).

Belongs to the class-II aminoacyl-tRNA synthetase family. ProS type 1 subfamily. As to quaternary structure, homodimer.

Its subcellular location is the cytoplasm. It carries out the reaction tRNA(Pro) + L-proline + ATP = L-prolyl-tRNA(Pro) + AMP + diphosphate. In terms of biological role, catalyzes the attachment of proline to tRNA(Pro) in a two-step reaction: proline is first activated by ATP to form Pro-AMP and then transferred to the acceptor end of tRNA(Pro). As ProRS can inadvertently accommodate and process non-cognate amino acids such as alanine and cysteine, to avoid such errors it has two additional distinct editing activities against alanine. One activity is designated as 'pretransfer' editing and involves the tRNA(Pro)-independent hydrolysis of activated Ala-AMP. The other activity is designated 'posttransfer' editing and involves deacylation of mischarged Ala-tRNA(Pro). The misacylated Cys-tRNA(Pro) is not edited by ProRS. This Listeria monocytogenes serotype 4a (strain HCC23) protein is Proline--tRNA ligase.